The sequence spans 286 residues: GTP-binding protein 8 (286 aa).

The region spanning 105–278 (KQPEVCFMGR…RCFIAHVTGK (174 aa)) is the EngB-type G domain. GTP is bound by residues 113–120 (GRSNVGKS), 142–146 (GHTKK), 160–163 (DMPG), 222–225 (TKID), and 257–259 (VSS). Residues serine 120 and threonine 144 each coordinate Mg(2+).

Belongs to the TRAFAC class TrmE-Era-EngA-EngB-Septin-like GTPase superfamily. EngB GTPase family. The cofactor is Mg(2+).

This is GTP-binding protein 8 (gtpbp8) from Danio rerio (Zebrafish).